Consider the following 388-residue polypeptide: Xylose isomerase (388 aa).

Residues His-54 and Asp-57 contribute to the active site. Residues Glu-181, Glu-217, His-220, Asp-245, Asp-255, Asp-257, and Asp-287 each contribute to the Mg(2+) site.

This sequence belongs to the xylose isomerase family. As to quaternary structure, homotetramer. Mg(2+) is required as a cofactor.

It is found in the cytoplasm. It carries out the reaction alpha-D-xylose = alpha-D-xylulofuranose. The protein is Xylose isomerase of Streptomyces olivaceoviridis (Streptomyces corchorusii).